Reading from the N-terminus, the 197-residue chain is Histocompatibility antigen 60c (197 aa).

An N-terminal signal peptide occupies residues 1-17 (MALLLLILESCSAGTYA). Residues asparagine 51, asparagine 81, and asparagine 114 are each glycosylated (N-linked (GlcNAc...) asparagine). The GPI-anchor amidated serine moiety is linked to residue serine 177. Positions 178–197 (MACKSSPFDGLIMILLIYIL) are cleaved as a propeptide — removed in mature form.

It belongs to the NKG2D ligand family. In terms of tissue distribution, expressed in skin, and weakly in large intestine.

The protein resides in the cell membrane. Its function is as follows. Ligand for the KLRK1 immunosurveillance receptor. Binding to KLRK1 stimulates cell lysis in vitro. This Mus musculus (Mouse) protein is Histocompatibility antigen 60c.